Consider the following 479-residue polypeptide: Cardiolipin synthase A (479 aa).

2 helical membrane-spanning segments follow: residues 8–28 and 38–58; these read IFGY…IHAV and IAWA…YLVF. PLD phosphodiesterase domains lie at 218–245 and 392–419; these read VNFR…GDEY and QPGF…DNRS. Residues His223, Lys225, Asp230, His397, Lys399, and Asp404 contribute to the active site.

This sequence belongs to the phospholipase D family. Cardiolipin synthase subfamily. ClsA sub-subfamily.

Its subcellular location is the cell inner membrane. It carries out the reaction 2 a 1,2-diacyl-sn-glycero-3-phospho-(1'-sn-glycerol) = a cardiolipin + glycerol. Its function is as follows. Catalyzes the reversible phosphatidyl group transfer from one phosphatidylglycerol molecule to another to form cardiolipin (CL) (diphosphatidylglycerol) and glycerol. The protein is Cardiolipin synthase A of Pseudomonas fluorescens (strain ATCC BAA-477 / NRRL B-23932 / Pf-5).